A 273-amino-acid chain; its full sequence is 1,4-dihydroxy-2-naphthoyl-CoA synthase (273 aa).

Substrate contacts are provided by residues R34, 73 to 77 (SGGDQ), Y85, 117 to 121 (YAVGG), T143, S149, Y246, and K261. 142–144 (QTG) provides a ligand contact to hydrogencarbonate. Basic and acidic residues predominate over residues 254–265 (GRDAFKEKRDPD). Positions 254 to 273 (GRDAFKEKRDPDFDQFPKFP) are disordered.

Belongs to the enoyl-CoA hydratase/isomerase family. MenB subfamily. It depends on hydrogencarbonate as a cofactor.

It carries out the reaction 2-succinylbenzoyl-CoA + H(+) = 1,4-dihydroxy-2-naphthoyl-CoA + H2O. Its pathway is quinol/quinone metabolism; 1,4-dihydroxy-2-naphthoate biosynthesis; 1,4-dihydroxy-2-naphthoate from chorismate: step 6/7. It participates in quinol/quinone metabolism; menaquinone biosynthesis. Converts o-succinylbenzoyl-CoA (OSB-CoA) to 1,4-dihydroxy-2-naphthoyl-CoA (DHNA-CoA). The sequence is that of 1,4-dihydroxy-2-naphthoyl-CoA synthase from Staphylococcus aureus (strain MSSA476).